The chain runs to 396 residues: L-lactate dehydrogenase (396 aa).

The FMN hydroxy acid dehydrogenase domain maps to Met-1–Gly-380. Tyr-24 serves as a coordination point for substrate. FMN-binding residues include Ser-106 and Gln-127. Tyr-129 is a binding site for substrate. Thr-155 serves as a coordination point for FMN. Arg-164 provides a ligand contact to substrate. Lys-251 is an FMN binding site. Catalysis depends on His-275, which acts as the Proton acceptor. Substrate is bound at residue Arg-278. Asp-306–Arg-330 provides a ligand contact to FMN.

The protein belongs to the FMN-dependent alpha-hydroxy acid dehydrogenase family. The cofactor is FMN.

It is found in the cell inner membrane. The catalysed reaction is (S)-lactate + A = pyruvate + AH2. Its function is as follows. Catalyzes the conversion of L-lactate to pyruvate. Is coupled to the respiratory chain. This is L-lactate dehydrogenase from Shigella boydii serotype 18 (strain CDC 3083-94 / BS512).